A 469-amino-acid chain; its full sequence is Tubulin gamma chain (469 aa).

142–148 lines the GTP pocket; the sequence is AGGTGSG.

It belongs to the tubulin family.

Its subcellular location is the cytoplasm. The protein resides in the cytoskeleton. It localises to the microtubule organizing center. The protein localises to the spindle pole body. Its function is as follows. Tubulin is the major constituent of microtubules. The gamma chain is found at microtubule organizing centers (MTOC) such as the spindle poles or the centrosome, suggesting that it is involved in the minus-end nucleation of microtubule assembly. The chain is Tubulin gamma chain (TUB4) from Microbotryum violaceum (Anther smut fungus).